A 317-amino-acid chain; its full sequence is Transcriptional regulator LsrR (317 aa).

Positions 33–56 form a DNA-binding region, H-T-H motif; the sequence is QSEISDRLGLTRLKVSRLLEKGHQ.

The protein belongs to the SorC transcriptional regulatory family.

The protein resides in the cytoplasm. Its activity is regulated as follows. Inactivated by phosphorylated autoinducer-2 (phospho-AI-2). Phospho-AI-2 acts by binding to LsrR, which is then unable to bind to the promoter regions, allowing the transcription of the target genes. Transcriptional regulator that represses the expression of the lsr operon in the absence of the quorum-sensing signaling molecule autoinducer 2 (AI-2). It also represses the expression of the lsrRK operon. Acts by binding directly to the lsrA and lsrR promoter regions. In the presence of phosphorylated autoinducer-2 (phospho-AI-2), LsrR is inactivated, leading to the transcription of the genes. The polypeptide is Transcriptional regulator LsrR (lsrR) (Escherichia coli O157:H7).